A 453-amino-acid polypeptide reads, in one-letter code: Methionine aminopeptidase 2-1 (453 aa).

Positions 1–12 (MGSKTPDGHRQS) are enriched in basic and acidic residues. The interval 1–101 (MGSKTPDGHR…TTPPRVPLST (101 aa)) is disordered. Residues 46 to 57 (GEDDDDDDENEE) are compositionally biased toward acidic residues. The span at 67–82 (KKKKRKKSKKKNKKSK) shows a compositional bias: basic residues. His210 lines the substrate pocket. The a divalent metal cation site is built by Asp231, Asp242, and His306. Position 314 (His314) interacts with substrate. The a divalent metal cation site is built by Glu339 and Glu434.

It belongs to the peptidase M24A family. Methionine aminopeptidase eukaryotic type 2 subfamily. Co(2+) serves as cofactor. Zn(2+) is required as a cofactor. The cofactor is Mn(2+). Requires Fe(2+) as cofactor.

The protein resides in the cytoplasm. It catalyses the reaction Release of N-terminal amino acids, preferentially methionine, from peptides and arylamides.. Cotranslationally removes the N-terminal methionine from nascent proteins. The N-terminal methionine is often cleaved when the second residue in the primary sequence is small and uncharged (Met-Ala-, Cys, Gly, Pro, Ser, Thr, or Val). The protein is Methionine aminopeptidase 2-1 of Aspergillus terreus (strain NIH 2624 / FGSC A1156).